The chain runs to 174 residues: RNA pyrophosphohydrolase (174 aa).

The Nudix hydrolase domain occupies 6–149 (GYRPNVGIIL…KRDVYLEALK (144 aa)). The Nudix box motif lies at 38–59 (GGIKPGESPETAMYRELYEEVG).

This sequence belongs to the Nudix hydrolase family. RppH subfamily. A divalent metal cation serves as cofactor.

In terms of biological role, accelerates the degradation of transcripts by removing pyrophosphate from the 5'-end of triphosphorylated RNA, leading to a more labile monophosphorylated state that can stimulate subsequent ribonuclease cleavage. The sequence is that of RNA pyrophosphohydrolase from Neisseria gonorrhoeae (strain ATCC 700825 / FA 1090).